Consider the following 439-residue polypeptide: Glutamate-1-semialdehyde 2,1-aminomutase (439 aa).

Residue Lys-270 is modified to N6-(pyridoxal phosphate)lysine.

The protein belongs to the class-III pyridoxal-phosphate-dependent aminotransferase family. HemL subfamily. Homodimer. Pyridoxal 5'-phosphate is required as a cofactor.

Its subcellular location is the cytoplasm. It catalyses the reaction (S)-4-amino-5-oxopentanoate = 5-aminolevulinate. Its pathway is porphyrin-containing compound metabolism; protoporphyrin-IX biosynthesis; 5-aminolevulinate from L-glutamyl-tRNA(Glu): step 2/2. The chain is Glutamate-1-semialdehyde 2,1-aminomutase from Kocuria rhizophila (strain ATCC 9341 / DSM 348 / NBRC 103217 / DC2201).